The following is a 299-amino-acid chain: Glutamyl-Q tRNA(Asp) synthetase (299 aa).

L-glutamate is bound by residues 18–22 (RFAPS) and glutamate 54. Positions 21 to 31 (PSPSGALHFGS) match the 'HIGH' region motif. Zn(2+) is bound by residues cysteine 110, cysteine 112, tyrosine 124, and cysteine 128. Residues tyrosine 181 and arginine 199 each coordinate L-glutamate. Residues 237-241 (KLSKQ) carry the 'KMSKS' region motif. Lysine 240 provides a ligand contact to ATP.

It belongs to the class-I aminoacyl-tRNA synthetase family. GluQ subfamily. It depends on Zn(2+) as a cofactor.

Its function is as follows. Catalyzes the tRNA-independent activation of glutamate in presence of ATP and the subsequent transfer of glutamate onto a tRNA(Asp). Glutamate is transferred on the 2-amino-5-(4,5-dihydroxy-2-cyclopenten-1-yl) moiety of the queuosine in the wobble position of the QUC anticodon. The chain is Glutamyl-Q tRNA(Asp) synthetase from Shewanella oneidensis (strain ATCC 700550 / JCM 31522 / CIP 106686 / LMG 19005 / NCIMB 14063 / MR-1).